The sequence spans 385 residues: Lipid-A-disaccharide synthase 2 (385 aa).

Belongs to the LpxB family.

It carries out the reaction a lipid X + a UDP-2-N,3-O-bis[(3R)-3-hydroxyacyl]-alpha-D-glucosamine = a lipid A disaccharide + UDP + H(+). It participates in bacterial outer membrane biogenesis; LPS lipid A biosynthesis. Its function is as follows. Condensation of UDP-2,3-diacylglucosamine and 2,3-diacylglucosamine-1-phosphate to form lipid A disaccharide, a precursor of lipid A, a phosphorylated glycolipid that anchors the lipopolysaccharide to the outer membrane of the cell. This Legionella pneumophila (strain Lens) protein is Lipid-A-disaccharide synthase 2.